The primary structure comprises 655 residues: Alpha-L-iduronidase (655 aa).

The first 25 residues, 1-25, serve as a signal peptide directing secretion; the sequence is MRPPGPRAPGLALLAALLAAPRALA. Residues Pro53, Leu55, and His57 each contribute to the alpha-D-mannopyranose site. His90 contacts alpha-L-iduronate. N-linked (GlcNAc...) asparagine glycosylation occurs at Asn109. 2 residues coordinate alpha-L-iduronate: Asn180 and Glu181. Glu181 functions as the Proton donor in the catalytic mechanism. Asn189 and Asn242 each carry an N-linked (GlcNAc...) asparagine glycan. Residues Lys263, Glu298, and Gly304 each contribute to the alpha-L-iduronate site. Glu298 (nucleophile) is an active-site residue. Trp305 is a binding site for alpha-D-mannopyranose. Asn335 carries N-linked (GlcNAc...) asparagine glycosylation. The alpha-L-iduronate site is built by Asp348 and Arg362. Asn371 and Asn414 each carry an N-linked (GlcNAc...) asparagine glycan. A disulfide bridge links Cys540 with Cys576.

The protein belongs to the glycosyl hydrolase 39 family. As to quaternary structure, monomer. Post-translationally, a smaller 63 kDa protein probably arises from IDUA protein by proteolytic cleavage. In terms of processing, N-glycosylation contributes to substrate binding and is required for full enzymatic activity. In terms of tissue distribution, detected in testis (at protein level). Expressed ubiquitously.

It is found in the lysosome. The enzyme catalyses Hydrolysis of unsulfated alpha-L-iduronosidic linkages in dermatan sulfate.. The chain is Alpha-L-iduronidase (IDUA) from Canis lupus familiaris (Dog).